The following is a 341-amino-acid chain: Heme A synthase (341 aa).

8 consecutive transmembrane segments (helical) span residues 8-28 (VIIWLLSGCVLLFLMVVVGGI), 92-112 (FHRFIGRIIGLVFFVPFVYFL), 126-146 (IVLLAMGAFQGFLGWFMVRSG), 160-180 (LHLTFAFITFAYTLWVALDLI), 201-221 (AALLIQIIYGGFVAGLNAGLI), 256-276 (VQFVHRTFAYAVVAVILFLFF), 294-314 (LVVFVFIQFLLGVFTLLYSVP), and 315-335 (LALGLIHQIMAFFLLSAMTYT). Histidine 260 is a heme binding site. Histidine 321 serves as a coordination point for heme.

It belongs to the COX15/CtaA family. Type 2 subfamily. In terms of assembly, interacts with CtaB. Heme b is required as a cofactor.

The protein resides in the cell membrane. The catalysed reaction is Fe(II)-heme o + 2 A + H2O = Fe(II)-heme a + 2 AH2. The protein operates within porphyrin-containing compound metabolism; heme A biosynthesis; heme A from heme O: step 1/1. In terms of biological role, catalyzes the conversion of heme O to heme A by two successive hydroxylations of the methyl group at C8. The first hydroxylation forms heme I, the second hydroxylation results in an unstable dihydroxymethyl group, which spontaneously dehydrates, resulting in the formyl group of heme A. The polypeptide is Heme A synthase (Flavobacterium johnsoniae (strain ATCC 17061 / DSM 2064 / JCM 8514 / BCRC 14874 / CCUG 350202 / NBRC 14942 / NCIMB 11054 / UW101) (Cytophaga johnsonae)).